Here is a 380-residue protein sequence, read N- to C-terminus: Chorismate synthase (380 aa).

Arg47 is an NADP(+) binding site. Residues Arg124–Ser126, Gly288, Lys303–Thr307, and Arg329 each bind FMN.

It belongs to the chorismate synthase family. In terms of assembly, homotetramer. FMNH2 is required as a cofactor.

It catalyses the reaction 5-O-(1-carboxyvinyl)-3-phosphoshikimate = chorismate + phosphate. Its pathway is metabolic intermediate biosynthesis; chorismate biosynthesis; chorismate from D-erythrose 4-phosphate and phosphoenolpyruvate: step 7/7. Its function is as follows. Catalyzes the anti-1,4-elimination of the C-3 phosphate and the C-6 proR hydrogen from 5-enolpyruvylshikimate-3-phosphate (EPSP) to yield chorismate, which is the branch point compound that serves as the starting substrate for the three terminal pathways of aromatic amino acid biosynthesis. This reaction introduces a second double bond into the aromatic ring system. This Leptospira borgpetersenii serovar Hardjo-bovis (strain JB197) protein is Chorismate synthase.